A 339-amino-acid chain; its full sequence is MKRKTLTQYLVEQQRSAQALGPEVRLLIEVVARACKAISHAVSKGALGGVLGSLESENVQGEVQKKLDVLSNEILLEANEWGGHLAAMASEEMETIHLIPNRYPKGEYLLLFDPLDGSSNIDVNVSIGTIFSVLRAPHRVAGADVCEQDFLQPGSQQVAAGYAVYGPQTMLVLTIGNGVVGFTLDREMGSWVLTHESMRIPEDTKEFAINMSNMRHWAPPVKRYIDECLAGKTGPLGKDYNMRWIASMVADVHRILTRGGIFMYPWDAREPGKAGKLRLMYEANPMGLIVEQAGGAAIDGTGRILDIQPDKLHQRVSVILGSKNEVERVGRYHAEAHAS.

Positions 91, 113, 115, and 116 each coordinate Mg(2+). Residues 116 to 119 (DGSS), Asn-210, and Lys-276 contribute to the substrate site. Residue Glu-282 participates in Mg(2+) binding.

It belongs to the FBPase class 1 family. Homotetramer. Requires Mg(2+) as cofactor.

The protein localises to the cytoplasm. It carries out the reaction beta-D-fructose 1,6-bisphosphate + H2O = beta-D-fructose 6-phosphate + phosphate. It participates in carbohydrate biosynthesis; gluconeogenesis. This Bordetella bronchiseptica (strain ATCC BAA-588 / NCTC 13252 / RB50) (Alcaligenes bronchisepticus) protein is Fructose-1,6-bisphosphatase class 1.